A 750-amino-acid polypeptide reads, in one-letter code: Photosystem I P700 chlorophyll a apoprotein A1 (750 aa).

The next 8 membrane-spanning stretches (helical) occupy residues 70-93 (VFSAHFGQLSIIFLWLSGMYFHGA), 156-179 (LYCTAIGALIFAALMLFAGWFHYH), 195-219 (LNHHLAGLLGLGSLSWAGHQVHVSL), 291-309 (IAHHHLAIAILFLIAGHMY), 346-369 (WHAQLSLNLAMLGSLTIIVAHHMY), 385-411 (LSLFTHHMWIGGFLIVGAAAHAAIFMV), 433-455 (AIISHLNWACIFLGFHSFGLYIH), and 531-549 (FLVHHIHAFTIHVTVLILL). Residues Cys-573 and Cys-582 each contribute to the [4Fe-4S] cluster site. Transmembrane regions (helical) follow at residues 589-610 (HVFLGLFWMYNAISVVIFHFSW) and 664-686 (LSAYGLFFLGAHFVWAFSLMFLF). His-675 lines the chlorophyll a' pocket. The chlorophyll a site is built by Met-683 and Tyr-691. A phylloquinone-binding site is contributed by Trp-692. The chain crosses the membrane as a helical span at residues 724-744 (AVGVTHYLLGGIATTWAFFLA).

This sequence belongs to the PsaA/PsaB family. In terms of assembly, the PsaA/B heterodimer binds the P700 chlorophyll special pair and subsequent electron acceptors. PSI consists of a core antenna complex that captures photons, and an electron transfer chain that converts photonic excitation into a charge separation. The eukaryotic PSI reaction center is composed of at least 11 subunits. It depends on P700 is a chlorophyll a/chlorophyll a' dimer, A0 is one or more chlorophyll a, A1 is one or both phylloquinones and FX is a shared 4Fe-4S iron-sulfur center. as a cofactor.

The protein localises to the plastid. It localises to the chloroplast thylakoid membrane. The enzyme catalyses reduced [plastocyanin] + hnu + oxidized [2Fe-2S]-[ferredoxin] = oxidized [plastocyanin] + reduced [2Fe-2S]-[ferredoxin]. Functionally, psaA and PsaB bind P700, the primary electron donor of photosystem I (PSI), as well as the electron acceptors A0, A1 and FX. PSI is a plastocyanin-ferredoxin oxidoreductase, converting photonic excitation into a charge separation, which transfers an electron from the donor P700 chlorophyll pair to the spectroscopically characterized acceptors A0, A1, FX, FA and FB in turn. Oxidized P700 is reduced on the lumenal side of the thylakoid membrane by plastocyanin. This is Photosystem I P700 chlorophyll a apoprotein A1 from Daucus carota (Wild carrot).